Here is a 233-residue protein sequence, read N- to C-terminus: Octanoyltransferase (233 aa).

In terms of domain architecture, BPL/LPL catalytic spans 36–211; that stretch reads DTTPDEIWLV…EFTRQLGYPT (176 aa). Residues 75-82, 142-144, and 155-157 each bind substrate; these read RGGQITYH, SLG, and GLA. The active-site Acyl-thioester intermediate is the Cys-173.

Belongs to the LipB family.

It localises to the cytoplasm. The catalysed reaction is octanoyl-[ACP] + L-lysyl-[protein] = N(6)-octanoyl-L-lysyl-[protein] + holo-[ACP] + H(+). It participates in protein modification; protein lipoylation via endogenous pathway; protein N(6)-(lipoyl)lysine from octanoyl-[acyl-carrier-protein]: step 1/2. Functionally, catalyzes the transfer of endogenously produced octanoic acid from octanoyl-acyl-carrier-protein onto the lipoyl domains of lipoate-dependent enzymes. Lipoyl-ACP can also act as a substrate although octanoyl-ACP is likely to be the physiological substrate. The chain is Octanoyltransferase from Yersinia pseudotuberculosis serotype O:1b (strain IP 31758).